The primary structure comprises 150 residues: Ribonuclease HI (150 aa).

The RNase H type-1 domain maps to 1–142; sequence MSDSVELFTD…ADQLANRGVD (142 aa). Positions 10, 48, 70, and 134 each coordinate Mg(2+).

Belongs to the RNase H family. In terms of assembly, monomer. Mg(2+) is required as a cofactor.

The protein localises to the cytoplasm. It catalyses the reaction Endonucleolytic cleavage to 5'-phosphomonoester.. Functionally, endonuclease that specifically degrades the RNA of RNA-DNA hybrids. This Pseudomonas syringae pv. tomato (strain ATCC BAA-871 / DC3000) protein is Ribonuclease HI.